The following is a 238-amino-acid chain: N-acetylneuraminic acid outer membrane channel protein NanC (238 aa).

The N-terminal stretch at 1–23 is a signal peptide; it reads MKKAKILSGVLLLCFSSPLISQA. The Periplasmic portion of the chain corresponds to 24–25; the sequence is AT. Over 26–32 the chain traverses the membrane; that stretch reads LDVRGGY. The Extracellular segment spans residues 33 to 39; that stretch reads RSGSHAY. A membrane pass occupies residues 40–49; the sequence is ETRLKVSEGW. The Periplasmic segment spans residues 50-52; the sequence is QNG. Residues 53–61 are membrane-embedded; sequence WWASMESNT. The Extracellular portion of the chain corresponds to 62–76; it reads WNTIHDNKKENAALN. Positions 77-86 form a transmembrane segment; the sequence is DVQVEVNYAI. Topologically, residues 87–91 are periplasmic; sequence KLDDQ. At 92–102 the chain is embedded in the membrane; that stretch reads WTVRPGMLTHF. Over 103-107 the chain is Extracellular; that stretch reads SSNGT. The hydrophobic stretch at 108–117 threads the membrane; the sequence is RYGPYVKLSW. Over 118–122 the chain is Periplasmic; it reads DATKD. A membrane pass occupies residues 123 to 132; sequence LNFGIRYRYD. Residues 133-151 are Extracellular-facing; it reads WKAYRQQDLSGDMSRDNVH. A transmembrane span lies at residues 152–159; the sequence is RWDGYVTY. Topologically, residues 160 to 164 are periplasmic; sequence HINSD. The chain crosses the lipid bilayer at residues 165-173; that stretch reads FTFAWQTTL. The Extracellular segment spans residues 174 to 190; the sequence is YSKQNDYRYANHKKWAT. A membrane pass occupies residues 191 to 200; sequence ENAFVLQYHM. Over 201 to 203 the chain is Periplasmic; it reads TPD. At 204–212 the chain is embedded in the membrane; sequence ITPYIEYDY. Residues 213-228 are Extracellular-facing; that stretch reads LDRQGVYNGRDNLSEN. Over 229-236 the chain traverses the membrane; the sequence is SYRIGVSF. At 237–238 the chain is on the periplasmic side; it reads KL.

This sequence belongs to the oligogalacturonate-specific porin KdgM (TC 1.B.35) family. NanC subfamily. In terms of assembly, monomer.

It localises to the cell outer membrane. The catalysed reaction is N-acetylneuraminate(in) = N-acetylneuraminate(out). Functionally, outer membrane channel protein allowing the entry of N-acetylneuraminic acid (Neu5Ac, the most abundant sialic acid on host cell surfaces) into the bacteria. NanC proteins form high-conductance channels which are open at low membrane potentials and which have a weak anion selectivity. The polypeptide is N-acetylneuraminic acid outer membrane channel protein NanC (nanC) (Escherichia coli O157:H7).